A 561-amino-acid chain; its full sequence is Transcription factor Clamp (561 aa).

A C2H2-type 1 zinc finger spans residues 127–149; that stretch reads FKCDVCSDMFPHLALLNAHKRMH. Zn(2+)-binding residues include cysteine 129, cysteine 132, histidine 145, and histidine 149. Residues 290–315 form a disordered region; sequence TGGTTPKREASSGSGHHPVKKRNSQQ. 6 C2H2-type zinc fingers span residues 360 to 382, 388 to 410, 416 to 438, 444 to 466, 472 to 494, and 500 to 522; these read FSCN…KKLH, YKCS…ARIH, YKCQ…ERTH, YVCG…RRIH, YKCE…AKVH, and YKCE…RGIH.

Homodimer. Interacts with msl-2; promoting recruitment of the male-specific lethal (MSL) histone acetyltransferase complex to chromatin. Interacts with Nelf-A. Interacts with NELF-B.

The protein localises to the nucleus. The protein resides in the chromosome. In terms of biological role, transcription factor involved in X-chromosome dosage compensation in males, the process by which transcription of the single X chromosome in the male is elevated. Binds to the DNA sequence (GA)n. Clamp-binding promotes nucleosome depletion and chromatin accessibility, thereby allowing access to other transcription factors. Specifically binds to cis-acting elements on the X-chromosome named chromatin entry sites and promotes recruitment of the male-specific lethal (MSL) histone acetyltransferase complex, which associates with actively transcribed genes on the male X-chromosome to upregulate their expression. Mechanistically, acts by promoting chromatin accessibility at chromatin entry sites, facilitating DNA-binding of msl-2, followed by MSL complex recruitment. In addition to dosage compensation, also involved in zygotic genome activation (ZGA), a critical event in early embryonic development during which the developmental control passes from maternally provided mRNAs to the expression of the zygotic genome after fertilization. Maternally-provided protein cooperates with Zelda (zld) to activate zygotic transcription by increasing chromatin accessibility at promoters of specific genes and facilitate zld occupancy at a subset of key embryonic promoters. Also acts as an activator of gypsy chromatin insulator function by promoting binding of Cp190 to chromatin. The chain is Transcription factor Clamp from Drosophila melanogaster (Fruit fly).